A 168-amino-acid chain; its full sequence is Disulfide bond formation protein B 2 (168 aa).

The Cytoplasmic portion of the chain corresponds to 1 to 9; that stretch reads MSLACLRSF. A helical transmembrane segment spans residues 10–26; sequence FLPALLASTAVLVASFH. The Periplasmic segment spans residues 27–44; that stretch reads LESVVGLVPCALCFSQRL. Cys36 and Cys39 are disulfide-bonded. A helical membrane pass occupies residues 45 to 61; that stretch reads MLGVYALVCLAALVHSP. The Cytoplasmic portion of the chain corresponds to 62 to 67; that stretch reads AARGRR. A helical membrane pass occupies residues 68-85; it reads AYAGLALASAFGGALLAG. Residues 86–140 are Periplasmic-facing; sequence RHVWLQGDPQVVDGCHLPVEQVLQRPLGEILQMFLLGSPDCVSISWSFLDLTLPE. Cysteines 100 and 126 form a disulfide. Residues 141–159 traverse the membrane as a helical segment; sequence WSLLAFLLLAAMPLSWLVA. Topologically, residues 160–168 are cytoplasmic; that stretch reads YRFRKRAMA.

Belongs to the DsbB family.

It localises to the cell inner membrane. Functionally, required for disulfide bond formation in some periplasmic proteins. Acts by oxidizing the DsbA protein. In Pseudomonas entomophila (strain L48), this protein is Disulfide bond formation protein B 2.